We begin with the raw amino-acid sequence, 101 residues long: MAKNSMKAREAKRAKLVAKFAEKRAALKAIISDVNASEEDRWNAVLTLQSLPRDSSASRQRNRCNQTGRPHGYLRKFGLSRIKVREACMKGEIPGLRKASW.

Belongs to the universal ribosomal protein uS14 family. Part of the 30S ribosomal subunit. Contacts proteins S3 and S10.

Binds 16S rRNA, required for the assembly of 30S particles and may also be responsible for determining the conformation of the 16S rRNA at the A site. In Vibrio campbellii (strain ATCC BAA-1116), this protein is Small ribosomal subunit protein uS14.